The chain runs to 419 residues: Napsin-A (419 aa).

An N-terminal signal peptide occupies residues 1-16; sequence MSPLLLLLLCLLLGNL. Residues 73–394 enclose the Peptidase A1 domain; the sequence is YFGTIGLGTP…KNVGPRVGLA (322 aa). A glycan (N-linked (GlcNAc...) asparagine) is linked at Asn85. Asp91 is an active-site residue. Cys104 and Cys111 are joined by a disulfide. N-linked (GlcNAc...) asparagine glycosylation is found at Asn128 and Asn149. Residues Cys269 and Cys273 are joined by a disulfide bond. Asp278 is an active-site residue. Cys312 and Cys349 form a disulfide bridge. An N-linked (GlcNAc...) asparagine glycan is attached at Asn331. The segment at 391-419 is disordered; it reads VGLARAQSRSTDRAERRTTQAQFFKRRPG.

Belongs to the peptidase A1 family. Expressed at the highest levels in the kidney, at a moderate level in the lung, and at low levels in the spleen and adipose tissue.

It is found in the secreted. Its function is as follows. May be involved in processing of pneumocyte surfactant precursors. The sequence is that of Napsin-A (Napsa) from Mus musculus (Mouse).